A 296-amino-acid polypeptide reads, in one-letter code: tRNA dimethylallyltransferase (296 aa).

11–18 (GPTAVGKT) provides a ligand contact to ATP. 13 to 18 (TAVGKT) contacts substrate. The interval 36–39 (DSQQ) is interaction with substrate tRNA.

The protein belongs to the IPP transferase family. In terms of assembly, monomer. Mg(2+) is required as a cofactor.

The catalysed reaction is adenosine(37) in tRNA + dimethylallyl diphosphate = N(6)-dimethylallyladenosine(37) in tRNA + diphosphate. In terms of biological role, catalyzes the transfer of a dimethylallyl group onto the adenine at position 37 in tRNAs that read codons beginning with uridine, leading to the formation of N6-(dimethylallyl)adenosine (i(6)A). This is tRNA dimethylallyltransferase from Streptococcus agalactiae serotype III (strain NEM316).